The chain runs to 292 residues: Large ribosomal subunit protein mL67 (292 aa).

The interval 59 to 83 (VELKSPSRLQLKSEPGNKGNPKGHG) is disordered.

This sequence belongs to the mitochondrion-specific ribosomal protein mL67 family. As to quaternary structure, component of the mitochondrial large ribosomal subunit (mt-LSU). Mature N.crassa 74S mitochondrial ribosomes consist of a small (37S) and a large (54S) subunit. The 37S small subunit contains a 16S ribosomal RNA (16S mt-rRNA) and 32 different proteins. The 54S large subunit contains a 23S rRNA (23S mt-rRNA) and 42 different proteins.

It localises to the mitochondrion. Component of the mitochondrial ribosome (mitoribosome), a dedicated translation machinery responsible for the synthesis of mitochondrial genome-encoded proteins, including at least some of the essential transmembrane subunits of the mitochondrial respiratory chain. The mitoribosomes are attached to the mitochondrial inner membrane and translation products are cotranslationally integrated into the membrane. mL67/MHR1 also has extraribosomal functions, being involved in regulation of mitochondrial DNA recombination, maintenance and repair, and generation of homoplasmic cells. mL67/MHR1 also acts as a transcription factor involved in regulation of RNA polymerase II-dependent transcription. The polypeptide is Large ribosomal subunit protein mL67 (mhr1) (Neurospora crassa (strain ATCC 24698 / 74-OR23-1A / CBS 708.71 / DSM 1257 / FGSC 987)).